We begin with the raw amino-acid sequence, 62 residues long: Photosystem II reaction center protein Z (62 aa).

Transmembrane regions (helical) follow at residues 8-28 (AVFA…VVFA) and 41-61 (FSGT…NSLI).

This sequence belongs to the PsbZ family. As to quaternary structure, PSII is composed of 1 copy each of membrane proteins PsbA, PsbB, PsbC, PsbD, PsbE, PsbF, PsbH, PsbI, PsbJ, PsbK, PsbL, PsbM, PsbT, PsbY, PsbZ, Psb30/Ycf12, at least 3 peripheral proteins of the oxygen-evolving complex and a large number of cofactors. It forms dimeric complexes.

It localises to the plastid. It is found in the chloroplast thylakoid membrane. Functionally, may control the interaction of photosystem II (PSII) cores with the light-harvesting antenna, regulates electron flow through the 2 photosystem reaction centers. PSII is a light-driven water plastoquinone oxidoreductase, using light energy to abstract electrons from H(2)O, generating a proton gradient subsequently used for ATP formation. The sequence is that of Photosystem II reaction center protein Z from Vitis vinifera (Grape).